A 368-amino-acid chain; its full sequence is tRNA 2-selenouridine synthase (368 aa).

In terms of domain architecture, Rhodanese spans 15–138 (FLNQHPIMDV…LRQYLIGVIE (124 aa)). Cys-98 (S-selanylcysteine intermediate) is an active-site residue.

The protein belongs to the SelU family. In terms of assembly, monomer.

The enzyme catalyses 5-methylaminomethyl-2-thiouridine(34) in tRNA + selenophosphate + (2E)-geranyl diphosphate + H2O + H(+) = 5-methylaminomethyl-2-selenouridine(34) in tRNA + (2E)-thiogeraniol + phosphate + diphosphate. It catalyses the reaction 5-methylaminomethyl-2-thiouridine(34) in tRNA + (2E)-geranyl diphosphate = 5-methylaminomethyl-S-(2E)-geranyl-thiouridine(34) in tRNA + diphosphate. It carries out the reaction 5-methylaminomethyl-S-(2E)-geranyl-thiouridine(34) in tRNA + selenophosphate + H(+) = 5-methylaminomethyl-2-(Se-phospho)selenouridine(34) in tRNA + (2E)-thiogeraniol. The catalysed reaction is 5-methylaminomethyl-2-(Se-phospho)selenouridine(34) in tRNA + H2O = 5-methylaminomethyl-2-selenouridine(34) in tRNA + phosphate. Functionally, involved in the post-transcriptional modification of the uridine at the wobble position (U34) of tRNA(Lys), tRNA(Glu) and tRNA(Gln). Catalyzes the conversion of 2-thiouridine (S2U-RNA) to 2-selenouridine (Se2U-RNA). Acts in a two-step process involving geranylation of 2-thiouridine (S2U) to S-geranyl-2-thiouridine (geS2U) and subsequent selenation of the latter derivative to 2-selenouridine (Se2U) in the tRNA chain. In Shewanella baltica (strain OS223), this protein is tRNA 2-selenouridine synthase.